Here is a 127-residue protein sequence, read N- to C-terminus: MRERAVGSKGSFPIGIAELQEVSCASVEINQPLLLADLRSDGMLRMRIPTDAARAASHELGKQWSRALWLHDEKPDGIIYDSRLNGEANTALFDRALPKLNVKSSGPLLDFRDEVAQILDDFSLEIV.

It belongs to the MbcT/ParT/Res family.

Functionally, probable toxic component of a type II toxin-antitoxin (TA) system. It is not known which gene encodes its antitoxin. This Sinorhizobium fredii (strain NBRC 101917 / NGR234) protein is Probable toxin y4kH.